A 117-amino-acid polypeptide reads, in one-letter code: Probable non-functional T cell receptor gamma variable (117 aa).

A signal peptide spans Met-1–Ser-20. In terms of domain architecture, Ig-like spans Asn-21–Arg-117. Residues Cys-41 and Cys-112 are joined by a disulfide bond. Asn-105 carries an N-linked (GlcNAc...) asparagine glycan.

As to quaternary structure, gamma-delta TR is a heterodimer composed of a gamma and delta chain; disulfide-linked. The gamma-delta TR is associated with the transmembrane signaling CD3 coreceptor proteins following the stoichiometry: a single gamma-delta TR heterodimer associates with one CD3D-CD3E heterodimer, one CD3G-CD3E heterodimer and one CD247 homodimer forming a stable octameric structure. Upon activation, gamma-delta TR complex associates with FCER1G to initiate intracellular signaling.

The protein localises to the cell membrane. Functionally, probable non-functional open reading frame (ORF) of V region of the variable domain of T cell receptor (TR) gamma chain. Non-functional ORF generally cannot participate in the synthesis of a productive T cell receptor (TR) chain due to altered V-(D)-J or switch recombination and/or splicing site (at mRNA level) and/or conserved amino acid change (protein level). Gamma-delta TRs recognize a variety of self and foreign non-peptide antigens frequently expressed at the epithelial boundaries between the host and external environment, including endogenous lipids presented by MH-like protein CD1D and phosphoantigens presented by butyrophilin-like molecule BTN3A1. Upon antigen recognition induces rapid, innate-like immune responses involved in pathogen clearance and tissue repair. Binding of gamma-delta TR complex to antigen triggers phosphorylation of immunoreceptor tyrosine-based activation motifs (ITAMs) in the CD3 chains by the LCK and FYN kinases, allowing the recruitment, phosphorylation, and activation of ZAP70 that facilitates phosphorylation of the scaffolding proteins LCP2 and LAT. This lead to the formation of a supramolecular signalosome that recruits the phospholipase PLCG1, resulting in calcium mobilization and ERK activation, ultimately leading to T cell expansion and differentiation into effector cells. Gamma-delta TRs are produced through somatic rearrangement of a limited repertoire of variable (V), diversity (D), and joining (J) genes. The potential diversity of gamma-delta TRs is conferred by the unique ability to rearrange (D) genes in tandem and to utilize all three reading frames. The combinatorial diversity is considerably increased by the sequence exonuclease trimming and random nucleotide (N) region additions which occur during the V-(D)-J rearrangements. This Homo sapiens (Human) protein is Probable non-functional T cell receptor gamma variable.